The sequence spans 257 residues: Trans-aconitate 2-methyltransferase (257 aa).

Belongs to the methyltransferase superfamily. Tam family.

Its subcellular location is the cytoplasm. It carries out the reaction trans-aconitate + S-adenosyl-L-methionine = (E)-3-(methoxycarbonyl)pent-2-enedioate + S-adenosyl-L-homocysteine. Its function is as follows. Catalyzes the S-adenosylmethionine monomethyl esterification of trans-aconitate. This Sinorhizobium medicae (strain WSM419) (Ensifer medicae) protein is Trans-aconitate 2-methyltransferase.